The sequence spans 307 residues: NAD kinase (307 aa).

D85 acts as the Proton acceptor in catalysis. NAD(+)-binding positions include D85 to G86, R90, N159 to E160, D189, and T200 to S205.

The protein belongs to the NAD kinase family. The cofactor is a divalent metal cation.

The protein localises to the cytoplasm. It catalyses the reaction NAD(+) + ATP = ADP + NADP(+) + H(+). In terms of biological role, involved in the regulation of the intracellular balance of NAD and NADP, and is a key enzyme in the biosynthesis of NADP. Catalyzes specifically the phosphorylation on 2'-hydroxyl of the adenosine moiety of NAD to yield NADP. This Mycobacterium bovis (strain ATCC BAA-935 / AF2122/97) protein is NAD kinase.